A 239-amino-acid polypeptide reads, in one-letter code: Succinate dehydrogenase [ubiquinone] iron-sulfur subunit (239 aa).

Residues 24–99 (AEAKFSVHPI…NANIITIYPL (76 aa)) enclose the 2Fe-2S ferredoxin-type domain. 4 residues coordinate [2Fe-2S] cluster: Cys63, Cys68, Cys71, and Cys83. Residues 142 to 172 (DRSELNGIYECILCACCSASCPSYWWNHDKY) enclose the 4Fe-4S ferredoxin-type domain. Cys152, Cys155, and Cys158 together coordinate [4Fe-4S] cluster. Cys162 provides a ligand contact to [3Fe-4S] cluster. Trp167 is a binding site for a ubiquinone. [3Fe-4S] cluster-binding residues include Cys209 and Cys215. [4Fe-4S] cluster is bound at residue Cys219.

The protein belongs to the succinate dehydrogenase/fumarate reductase iron-sulfur protein family. Component of complex II composed of four subunits: a flavoprotein (FP), an iron-sulfur protein (IP), and a cytochrome b composed of a large and a small subunit. It depends on [2Fe-2S] cluster as a cofactor. [3Fe-4S] cluster serves as cofactor. Requires [4Fe-4S] cluster as cofactor.

It localises to the mitochondrion inner membrane. The catalysed reaction is a quinone + succinate = fumarate + a quinol. It participates in carbohydrate metabolism; tricarboxylic acid cycle; fumarate from succinate (eukaryal route): step 1/1. Iron-sulfur protein (IP) subunit of succinate dehydrogenase (SDH) that is involved in complex II of the mitochondrial electron transport chain and is responsible for transferring electrons from succinate to ubiquinone (coenzyme Q). In Porphyra purpurea (Red seaweed), this protein is Succinate dehydrogenase [ubiquinone] iron-sulfur subunit (SDH2).